We begin with the raw amino-acid sequence, 258 residues long: UPF0246 protein YaaA (258 aa).

It belongs to the UPF0246 family.

This chain is UPF0246 protein YaaA, found in Escherichia coli (strain SMS-3-5 / SECEC).